The primary structure comprises 151 residues: UPF0178 protein Spea_2958 (151 aa).

This sequence belongs to the UPF0178 family.

This Shewanella pealeana (strain ATCC 700345 / ANG-SQ1) protein is UPF0178 protein Spea_2958.